Consider the following 468-residue polypeptide: Methylenetetrahydrofolate--tRNA-(uracil-5-)-methyltransferase TrmFO (468 aa).

13-18 (GGGLAG) is an FAD binding site.

It belongs to the MnmG family. TrmFO subfamily. FAD is required as a cofactor.

It localises to the cytoplasm. The enzyme catalyses uridine(54) in tRNA + (6R)-5,10-methylene-5,6,7,8-tetrahydrofolate + NADH + H(+) = 5-methyluridine(54) in tRNA + (6S)-5,6,7,8-tetrahydrofolate + NAD(+). The catalysed reaction is uridine(54) in tRNA + (6R)-5,10-methylene-5,6,7,8-tetrahydrofolate + NADPH + H(+) = 5-methyluridine(54) in tRNA + (6S)-5,6,7,8-tetrahydrofolate + NADP(+). Functionally, catalyzes the folate-dependent formation of 5-methyl-uridine at position 54 (M-5-U54) in all tRNAs. The polypeptide is Methylenetetrahydrofolate--tRNA-(uracil-5-)-methyltransferase TrmFO (Bartonella henselae (strain ATCC 49882 / DSM 28221 / CCUG 30454 / Houston 1) (Rochalimaea henselae)).